We begin with the raw amino-acid sequence, 316 residues long: Pleckstrin homology domain-containing family F member 1 homolog (316 aa).

The PH domain occupies 35–131 (VLVGEGVLTK…WMAHINKCVE (97 aa)). The FYVE-type zinc finger occupies 152–212 (DTDASVCMHC…VCDACYERLK (61 aa)). Cysteine 158, cysteine 161, cysteine 175, cysteine 178, cysteine 183, cysteine 186, cysteine 204, and cysteine 207 together coordinate Zn(2+). The segment at 215 to 316 (PSSLGSGEDS…AAVATTGSHC (102 aa)) is disordered. The span at 244–253 (SNDEDSDEET) shows a compositional bias: acidic residues. Residues 279-292 (SSTITSPSSATTGS) are compositionally biased toward low complexity. Over residues 298 to 316 (VTPSVQSSPAAVATTGSHC) the composition is skewed to polar residues.

Interacts with Gdi (Rab GDP dissociation inhibitor). As to expression, in ovaries, expressed both in the germ line cells and in the overlying somatic follicular epithelium.

It is found in the apical cell membrane. The protein resides in the endosome membrane. Its subcellular location is the cytoplasm. The protein localises to the cell cortex. Its function is as follows. Functions in the regulation of endosome morphology and late endosome formation. Has a role in controlling trafficking from early to late endosomes and from late endosomes to lysosomes. Important for localization of Gdi to the endosomal membranes. May function in controlling the activity of multiple regulators in the endocytic pathway, perhaps by positively controlling those involved in the early steps of endocytosis such as Rab5 and hrs, and negative regulating those involved in the late stages of endocytosis like car and VhaSFD. The sequence is that of Pleckstrin homology domain-containing family F member 1 homolog from Drosophila melanogaster (Fruit fly).